The primary structure comprises 638 residues: uncharacterized protein (638 aa).

This is an uncharacterized protein from Bos taurus (Bovine).